A 556-amino-acid chain; its full sequence is 2-isopropylmalate synthase (556 aa).

The 275-residue stretch at 33 to 307 (PIWCSSDLRD…DPELDFSDID (275 aa)) folds into the Pyruvate carboxyltransferase domain. The Mg(2+) site is built by aspartate 42, histidine 246, histidine 248, and asparagine 282. Residues 439–556 (ANTPYALISH…SLSQTQAKAA (118 aa)) form a regulatory domain region.

This sequence belongs to the alpha-IPM synthase/homocitrate synthase family. LeuA type 2 subfamily. In terms of assembly, homodimer. Requires Mg(2+) as cofactor.

The protein resides in the cytoplasm. It carries out the reaction 3-methyl-2-oxobutanoate + acetyl-CoA + H2O = (2S)-2-isopropylmalate + CoA + H(+). Its pathway is amino-acid biosynthesis; L-leucine biosynthesis; L-leucine from 3-methyl-2-oxobutanoate: step 1/4. Functionally, catalyzes the condensation of the acetyl group of acetyl-CoA with 3-methyl-2-oxobutanoate (2-ketoisovalerate) to form 3-carboxy-3-hydroxy-4-methylpentanoate (2-isopropylmalate). In Pseudomonas savastanoi pv. phaseolicola (strain 1448A / Race 6) (Pseudomonas syringae pv. phaseolicola (strain 1448A / Race 6)), this protein is 2-isopropylmalate synthase.